Reading from the N-terminus, the 469-residue chain is 3-isopropylmalate dehydratase large subunit (469 aa).

Cysteine 347, cysteine 410, and cysteine 413 together coordinate [4Fe-4S] cluster.

This sequence belongs to the aconitase/IPM isomerase family. LeuC type 1 subfamily. As to quaternary structure, heterodimer of LeuC and LeuD. [4Fe-4S] cluster is required as a cofactor.

The enzyme catalyses (2R,3S)-3-isopropylmalate = (2S)-2-isopropylmalate. It participates in amino-acid biosynthesis; L-leucine biosynthesis; L-leucine from 3-methyl-2-oxobutanoate: step 2/4. Functionally, catalyzes the isomerization between 2-isopropylmalate and 3-isopropylmalate, via the formation of 2-isopropylmaleate. This Burkholderia ambifaria (strain MC40-6) protein is 3-isopropylmalate dehydratase large subunit.